Here is an 80-residue protein sequence, read N- to C-terminus: Protein YibX (80 aa).

This Escherichia coli (strain K12) protein is Protein YibX.